The chain runs to 64 residues: Large ribosomal subunit protein bL35 (64 aa).

A disordered region spans residues 1 to 44; it reads MPKLKTNRGAAKRFKVKASGRISRARSNHSHILTKKDPKRKRRL. Residues 10 to 44 show a composition bias toward basic residues; sequence AAKRFKVKASGRISRARSNHSHILTKKDPKRKRRL.

This sequence belongs to the bacterial ribosomal protein bL35 family.

In Halorhodospira halophila (strain DSM 244 / SL1) (Ectothiorhodospira halophila (strain DSM 244 / SL1)), this protein is Large ribosomal subunit protein bL35.